A 368-amino-acid chain; its full sequence is uncharacterized protein (368 aa).

This is an uncharacterized protein from Rickettsia prowazekii (strain Madrid E).